The chain runs to 254 residues: MRALDYRAAIETITSFLSEKLEESGSGGFVIGISGGIDSATAAYLAAKAVGTENVLGLIMPYYENNDVEDAKLVCESLGIDYEVINIKPIVESFVSQLGFQPDKRSLGNIMSRTRMILLYAHANQLNRLVLGTSNRSEFLTGYFTKWGDGASDYAPLINLYKTEVWEIAKLLGVPGRIIQKKPTAGLWEGQTDEDELGISYRLLDEILWRLVDLKMPKEKIVEELGISVEKVEYVEGLVRRSEHKRRLPVGPEF.

ATP is bound at residue 32–39; it reads GISGGIDS. Aspartate 38 contributes to the Mg(2+) binding site. Arginine 113 serves as a coordination point for deamido-NAD(+). Threonine 133 is an ATP binding site. Residue glutamate 138 participates in Mg(2+) binding. The deamido-NAD(+) site is built by lysine 146 and aspartate 153. ATP-binding residues include lysine 162 and threonine 184. 244–245 contacts deamido-NAD(+); sequence HK.

This sequence belongs to the NAD synthetase family. As to quaternary structure, homodimer.

It carries out the reaction deamido-NAD(+) + NH4(+) + ATP = AMP + diphosphate + NAD(+) + H(+). It functions in the pathway cofactor biosynthesis; NAD(+) biosynthesis; NAD(+) from deamido-NAD(+) (ammonia route): step 1/1. In terms of biological role, catalyzes the ATP-dependent amidation of deamido-NAD to form NAD. Uses ammonia as a nitrogen source. This is NH(3)-dependent NAD(+) synthetase from Thermococcus kodakarensis (strain ATCC BAA-918 / JCM 12380 / KOD1) (Pyrococcus kodakaraensis (strain KOD1)).